We begin with the raw amino-acid sequence, 209 residues long: Ribosome maturation factor RimM (209 aa).

The disordered stretch occupies residues 1–28; that stretch reads MARRPQRPAPSGRAGAGRGAAGAAPPGP. The 75-residue stretch at 123–197 folds into the PRC barrel domain; that stretch reads EDEFFTADLV…RVTIAPPEDL (75 aa).

The protein belongs to the RimM family. Binds ribosomal protein uS19.

It is found in the cytoplasm. In terms of biological role, an accessory protein needed during the final step in the assembly of 30S ribosomal subunit, possibly for assembly of the head region. Essential for efficient processing of 16S rRNA. May be needed both before and after RbfA during the maturation of 16S rRNA. It has affinity for free ribosomal 30S subunits but not for 70S ribosomes. The polypeptide is Ribosome maturation factor RimM (Methylobacterium sp. (strain 4-46)).